Here is a 114-residue protein sequence, read N- to C-terminus: Iron-sulfur cluster insertion protein ErpA (114 aa).

Iron-sulfur cluster is bound by residues Cys42, Cys106, and Cys108.

This sequence belongs to the HesB/IscA family. As to quaternary structure, homodimer. Iron-sulfur cluster is required as a cofactor.

Its function is as follows. Required for insertion of 4Fe-4S clusters for at least IspG. This is Iron-sulfur cluster insertion protein ErpA from Serratia proteamaculans (strain 568).